Reading from the N-terminus, the 56-residue chain is Small ribosomal subunit protein uS14 (56 aa).

Residues C21, C24, C39, and C42 each coordinate Zn(2+).

This sequence belongs to the universal ribosomal protein uS14 family. As to quaternary structure, component of the 40S small ribosomal subunit. The cofactor is Zn(2+).

The protein resides in the cytoplasm. The protein localises to the cytosol. It is found in the rough endoplasmic reticulum. This is Small ribosomal subunit protein uS14 (RpS29) from Drosophila melanogaster (Fruit fly).